The following is a 639-amino-acid chain: Serine/threonine-protein phosphatase 2B catalytic subunit A1 (639 aa).

Fe cation contacts are provided by Asp120, His122, and Asp148. Asp148 and Asn180 together coordinate Zn(2+). The active-site Proton donor is the His181. Zn(2+) contacts are provided by His229 and His311. Residues 494–503 are compositionally biased toward basic and acidic residues; it reads KSDIENERLP. Positions 494–602 are disordered; it reads KSDIENERLP…PSTRRRSLEN (109 aa). 2 stretches are compositionally biased toward low complexity: residues 515 to 527 and 546 to 572; these read ASPS…PATP and TPIS…GGPP.

Belongs to the PPP phosphatase family. PP-2B subfamily. As to quaternary structure, composed of two components (A and B), the A component is the catalytic subunit and the B component confers calcium sensitivity. Fe(3+) serves as cofactor. It depends on Zn(2+) as a cofactor.

It catalyses the reaction O-phospho-L-seryl-[protein] + H2O = L-seryl-[protein] + phosphate. It carries out the reaction O-phospho-L-threonyl-[protein] + H2O = L-threonyl-[protein] + phosphate. Functionally, calcium-dependent, calmodulin-stimulated protein phosphatase. This subunit may have a role in the calmodulin activation of calcineurin. The chain is Serine/threonine-protein phosphatase 2B catalytic subunit A1 (CNA1) from Cryptococcus neoformans var. grubii serotype A (strain H99 / ATCC 208821 / CBS 10515 / FGSC 9487) (Filobasidiella neoformans var. grubii).